The chain runs to 142 residues: Large ribosomal subunit protein uL11 (142 aa).

It belongs to the universal ribosomal protein uL11 family. In terms of assembly, part of the ribosomal stalk of the 50S ribosomal subunit. Interacts with L10 and the large rRNA to form the base of the stalk. L10 forms an elongated spine to which L12 dimers bind in a sequential fashion forming a multimeric L10(L12)X complex. In terms of processing, one or more lysine residues are methylated.

Its function is as follows. Forms part of the ribosomal stalk which helps the ribosome interact with GTP-bound translation factors. The chain is Large ribosomal subunit protein uL11 from Haemophilus influenzae (strain PittGG).